A 333-amino-acid chain; its full sequence is Electron transfer flavoprotein subunit alpha, mitochondrial (333 aa).

Residues 1–19 (MFRAAAPGQLRRAASLLRF) constitute a mitochondrion transit peptide. The segment at 20–204 (QSTLVIAEHA…GISEWLDQKL (185 aa)) is domain I. Lysine 59 carries the N6-acetyllysine; alternate modification. Position 59 is an N6-succinyllysine; alternate (lysine 59). Lysine 62 carries the post-translational modification N6-acetyllysine. Lysine 69 carries the N6-acetyllysine; alternate modification. N6-succinyllysine; alternate is present on lysine 69. The residue at position 75 (lysine 75) is an N6-acetyllysine. Lysine 85 is subject to N6-acetyllysine; alternate. Lysine 85 is modified (N6-succinyllysine; alternate). The residue at position 93 (threonine 93) is a Phosphothreonine. 2 positions are modified to N6-acetyllysine: lysine 101 and lysine 139. Serine 140 is subject to Phosphoserine. Lysine 158 is modified (N6-acetyllysine; alternate). An N6-succinyllysine; alternate modification is found at lysine 158. An N6-acetyllysine modification is found at lysine 164. At lysine 187 the chain carries N6-succinyllysine. The residue at position 203 (lysine 203) is an N6-acetyllysine; alternate. Lysine 203 is modified (N6-succinyllysine; alternate). Residues 205-333 (TKSDRPELTG…PEMTEILKKK (129 aa)) form a domain II region. Lysine 216 bears the N6-succinyllysine mark. Arginine 223 serves as a coordination point for FAD. N6-acetyllysine; alternate occurs at positions 226 and 232. Residues lysine 226 and lysine 232 each carry the N6-succinyllysine; alternate modification. Residues serine 248, 263–266 (VGQT), 281–286 (SGAIQH), and asparagine 300 each bind FAD. Lysine 301 carries the post-translational modification N6-succinyllysine. 318–319 (DL) serves as a coordination point for FAD.

It belongs to the ETF alpha-subunit/FixB family. Heterodimer composed of ETFA and ETFB. Identified in a complex that contains ETFA, ETFB and ETFRF1. Interaction with ETFRF1 promotes dissociation of the bound FAD and loss of electron transfer activity. Interacts with TASOR. It depends on FAD as a cofactor.

It is found in the mitochondrion matrix. In terms of biological role, heterodimeric electron transfer flavoprotein that accepts electrons from several mitochondrial dehydrogenases, including acyl-CoA dehydrogenases, glutaryl-CoA and sarcosine dehydrogenase. It transfers the electrons to the main mitochondrial respiratory chain via ETF-ubiquinone oxidoreductase (ETF dehydrogenase). Required for normal mitochondrial fatty acid oxidation and normal amino acid metabolism. This is Electron transfer flavoprotein subunit alpha, mitochondrial (Etfa) from Rattus norvegicus (Rat).